The sequence spans 72 residues: Protein Kish (72 aa).

A signal peptide spans 1 to 26 (MSALFNFRSLLQVILLLICSCSYVHG). At 27–53 (QWPSLLDRYKNHEVLGAFWKMARVGER) the chain is on the lumenal side. A helical membrane pass occupies residues 54 to 72 (ASPYVSLACILMAISQFNS).

It belongs to the KISH family.

The protein localises to the endoplasmic reticulum membrane. Its subcellular location is the golgi apparatus membrane. In terms of biological role, involved in the early part of the secretory pathway. The polypeptide is Protein Kish (Saccharomyces cerevisiae (strain ATCC 204508 / S288c) (Baker's yeast)).